A 262-amino-acid chain; its full sequence is NAD-dependent glucose-6-phosphate dehydrogenase (262 aa).

4 residues coordinate NAD(+): N90, S115, Y152, and K156. Y152 serves as the catalytic Proton acceptor.

The protein belongs to the NAD(P)-dependent epimerase/dehydratase family. Homodimer.

It catalyses the reaction D-glucose 6-phosphate + NAD(+) = 6-phospho-D-glucono-1,5-lactone + NADH + H(+). Its pathway is carbohydrate degradation; pentose phosphate pathway. In terms of biological role, catalyzes the NAD-dependent oxidation of glucose 6-phosphate to 6-phosphogluconolactone. The protein is NAD-dependent glucose-6-phosphate dehydrogenase of Haloferax volcanii (strain ATCC 29605 / DSM 3757 / JCM 8879 / NBRC 14742 / NCIMB 2012 / VKM B-1768 / DS2) (Halobacterium volcanii).